A 441-amino-acid chain; its full sequence is uncharacterized protein (441 aa).

Residues 121-143 (TLSPSIVSEQQQQQQQQQQQQQQ) are compositionally biased toward low complexity. Disordered stretches follow at residues 121–146 (TLSP…QAIS) and 371–392 (SDAD…TAPN). The span at 382-391 (PTSAPSTTAP) shows a compositional bias: polar residues.

This is an uncharacterized protein from Dictyostelium discoideum (Social amoeba).